The primary structure comprises 382 residues: D-galactonate dehydratase (382 aa).

Mg(2+) is bound at residue D183. H185 acts as the Proton donor in catalysis. Mg(2+) is bound by residues E209 and E235. The Proton acceptor role is filled by H285.

This sequence belongs to the mandelate racemase/muconate lactonizing enzyme family. GalD subfamily. Mg(2+) serves as cofactor.

It catalyses the reaction D-galactonate = 2-dehydro-3-deoxy-D-galactonate + H2O. Its pathway is carbohydrate acid metabolism; D-galactonate degradation; D-glyceraldehyde 3-phosphate and pyruvate from D-galactonate: step 1/3. In terms of biological role, catalyzes the dehydration of D-galactonate to 2-keto-3-deoxy-D-galactonate. This is D-galactonate dehydratase from Klebsiella pneumoniae subsp. pneumoniae (strain ATCC 700721 / MGH 78578).